Here is a 232-residue protein sequence, read N- to C-terminus: Lipoprotein-releasing system ATP-binding protein LolD 2 (232 aa).

The ABC transporter domain maps to 11–231 (VYLHDIKRQY…SLQDGVVVEL (221 aa)). 47–54 (APSGSGKS) lines the ATP pocket.

The protein belongs to the ABC transporter superfamily. Lipoprotein translocase (TC 3.A.1.125) family. The complex is composed of two ATP-binding proteins (LolD) and two transmembrane proteins (LolC and LolE).

The protein localises to the cell inner membrane. In terms of biological role, part of the ABC transporter complex LolCDE involved in the translocation of mature outer membrane-directed lipoproteins, from the inner membrane to the periplasmic chaperone, LolA. Responsible for the formation of the LolA-lipoprotein complex in an ATP-dependent manner. This chain is Lipoprotein-releasing system ATP-binding protein LolD 2, found in Rhodopseudomonas palustris (strain ATCC BAA-98 / CGA009).